Consider the following 411-residue polypeptide: SKA complex subunit 3 (411 aa).

Phosphoserine is present on residues serine 34, serine 119, serine 138, serine 154, and serine 158. Residues 102 to 410 form a binds the NDC80 complex region; it reads YQARDKEDSG…GTRGAANKEN (309 aa). A phosphothreonine mark is found at threonine 189 and threonine 216. Residues 195-410 form a binds microtubules and contacts the microtubule-binding domain of SKA1 region; the sequence is PSVQVLKTPR…GTRGAANKEN (216 aa). Serine 289 carries the phosphoserine modification. Residue threonine 297 is modified to Phosphothreonine. Phosphoserine occurs at positions 324 and 352. The interval 349-410 is required for localization to kinetochores; the sequence is EPPSSAITSC…GTRGAANKEN (62 aa). The residue at position 363 (threonine 363) is a Phosphothreonine.

Belongs to the SKA3 family. As to quaternary structure, component of the SKA complex, composed of SKA1, SKA2 and SKA3. The SKA complex is a homodimer organized around a central W-shaped coiled-coil structure, formed by the interacting domains of SKA1, SKA2, and SKA3, each end of the 'W' is extended further by the C-terminal microtubule-binding domains of SKA1 and SKA3; the complex forms extended structures on microtubules. Interacts with the NDC80-NUF2 heterodimer of the NDC80 complex (via coiled coils); the interaction localizes the SKA complex to the kinetochore and is required to establish kinetochore-microtubule end-on attachments. Interacts with polo-like kinase PLK1.

Its subcellular location is the cytoplasm. It localises to the cytoskeleton. The protein resides in the spindle. It is found in the chromosome. The protein localises to the centromere. Its subcellular location is the kinetochore. It localises to the microtubule organizing center. The protein resides in the centrosome. Functionally, component of the SKA complex, a microtubule plus end-binding complex of the outer kinetochore that stabilizes spindle microtubule-kinetochore attachments, promotes alignment of chromosomes at the mitotic spindle equator (chromosome congression) and assists suppression of the spindle assembly checkpoint. Kinetochores, consisting of a centromere-associated inner segment and a microtubule-contacting outer segment, play a crucial role in chromosome segregation by mediating the physical connection between centromeric DNA and spindle microtubules. The outer kinetochore is made up of the ten-subunit KMN network complex, comprising the MIS12, NDC80 and KNL1 complexes, and auxiliary microtubule-associated components such as the SKA complex; together they connect the outer kinetochore with the inner kinetochore, bind microtubules, and mediate interactions with mitotic checkpoint proteins that delay anaphase until chromosomes are bioriented on the spindle. The SKA complex is loaded onto bioriented kinetochores and it facilitates chromosome congression by stabilizing microtubules together with MAPRE1, and end-on attachment of the NDC80 complex to depolymerizing spindle microtubules, thereby assisting the poleward-moving kinetochore in withstanding microtubule pulling forces. The complex associates with dynamic microtubule plus-ends and can track both depolymerizing and elongating microtubules. The complex recruits protein phosphatase 1 (PP1) to the kinetochore in prometaphase and metaphase, to oppose spindle assembly checkpoint signaling and promote the onset of anaphase. Within the complex, binds microtubules but with a much lower affinity than SKA1. Promotes stability of the polo-like kinase PLK1 protein. During meiosis the SKA complex stabilizes the meiotic spindle and is required for its migration to the cortex. The polypeptide is SKA complex subunit 3 (Ska3) (Mus musculus (Mouse)).